The primary structure comprises 271 residues: Chymotrypsin BII (271 aa).

Positions 1–15 (MIGKLSLLLVCVAVA) are cleaved as a signal peptide. A propeptide spans 16-45 (SGNPAAGKPWHWKSPKPLVDPRIHVNATPR) (activation peptide). A Peptidase S1 domain is found at 46 to 268 (IVGGVEATPH…YLDWIEQKTG (223 aa)). Cysteine 71 and cysteine 87 are disulfide-bonded. Catalysis depends on charge relay system residues histidine 86 and aspartate 132. Cystine bridges form between cysteine 196/cysteine 209 and cysteine 219/cysteine 245. Serine 223 serves as the catalytic Charge relay system.

This sequence belongs to the peptidase S1 family.

The protein resides in the secreted. The protein localises to the extracellular space. The catalysed reaction is Preferential cleavage: Tyr-|-Xaa, Trp-|-Xaa, Phe-|-Xaa, Leu-|-Xaa.. Functionally, serine protease with chymotryptic and collagenolytic activities. This is Chymotrypsin BII from Penaeus vannamei (Whiteleg shrimp).